The primary structure comprises 550 residues: Solute carrier family 22 member 6 (550 aa).

The Cytoplasmic portion of the chain corresponds to 1-9 (MAFNDLLQQ). Residues 10–30 (VGGVGRFQQIQVTLVVLPLLL) form a helical membrane-spanning segment. At 31–135 (MASHNTVQNF…LVCSHRALRQ (105 aa)) the chain is on the extracellular side. N56, N92, and N113 each carry an N-linked (GlcNAc...) asparagine glycan. Residues 136–156 (LAQSLYMVGVLLGAMVFGYLA) form a helical membrane-spanning segment. The Cytoplasmic segment spans residues 157–164 (DRLGRRKV). The chain crosses the membrane as a helical span at residues 165–187 (LILNYLQTAVSGTCAAFAPNFPI). Topologically, residues 188-190 (YCA) are extracellular. The helical transmembrane segment at 191–213 (FRLLSGMSLAGIALNCMTLNVEW) threads the bilayer. At 214–224 (MPIHTRACVGT) the chain is on the cytoplasmic side. Residues 225–245 (LIGYVYSLGQFLLAGVAYAVP) traverse the membrane as a helical segment. Over 246–248 (HWR) the chain is Extracellular. Residues 249-269 (HLQLLISVPFFAFFIYSWFFI) form a helical membrane-spanning segment. At 270–337 (ESARWHSSSG…ELLRCPTLRH (68 aa)) the chain is on the cytoplasmic side. The helical transmembrane segment at 338–358 (LFLCLSMLWFATSFAYYGLVM) threads the bilayer. The Extracellular portion of the chain corresponds to 359 to 368 (DLQGFGVSIY). The chain crosses the membrane as a helical span at residues 369–389 (LIQVIFGAVDLPAKLVGFLVI). Over 390 to 395 (NSLGRR) the chain is Cytoplasmic. A helical membrane pass occupies residues 396–416 (PAQMAALLLAGICILLNGVVP). The Extracellular segment spans residues 417–425 (QDQSVIRTS). Residues 426–446 (LAVLGKGCLAASFNCIFLYTG) form a helical membrane-spanning segment. Residues 447 to 456 (ELYPTMIRQT) are Cytoplasmic-facing. Residues 457–477 (GLGMGSTMARVGSIVSPLVSM) traverse the membrane as a helical segment. The Extracellular portion of the chain corresponds to 478–484 (TTELYPS). Residues 485 to 505 (VPLFIYGAVPVAASAVTVLLP) traverse the membrane as a helical segment. Residues 506–550 (ETLGQPLPDTVQDLESRKGKQTPQQQEHQKYMVPLQASAQEKNGL) are Cytoplasmic-facing. The tract at residues 513–550 (PDTVQDLESRKGKQTPQQQEHQKYMVPLQASAQEKNGL) is disordered.

The protein belongs to the major facilitator (TC 2.A.1) superfamily. Organic cation transporter (TC 2.A.1.19) family. In terms of processing, glycosylated. Glycosylation is necessary for proper targeting of the transporter to the plasma membrane. As to expression, expressed in kidney; in the basolateral membrane of the proximal tubule.

The protein localises to the basolateral cell membrane. The protein resides in the basal cell membrane. The catalysed reaction is (6R)-L-erythro-5,6,7,8-tetrahydrobiopterin(out) + a dicarboxylate(in) = (6R)-L-erythro-5,6,7,8-tetrahydrobiopterin(in) + a dicarboxylate(out). It carries out the reaction L-erythro-7,8-dihydrobiopterin(out) + a dicarboxylate(in) = L-erythro-7,8-dihydrobiopterin(in) + a dicarboxylate(out). The enzyme catalyses L-sepiapterin(out) + a dicarboxylate(in) = L-sepiapterin(in) + a dicarboxylate(out). It catalyses the reaction prostaglandin F2alpha(out) + a dicarboxylate(in) = prostaglandin F2alpha(in) + a dicarboxylate(out). The catalysed reaction is prostaglandin E2(out) + a dicarboxylate(in) = prostaglandin E2(in) + a dicarboxylate(out). It carries out the reaction 3',5'-cyclic AMP(out) + a dicarboxylate(in) = 3',5'-cyclic AMP(in) + a dicarboxylate(out). The enzyme catalyses 3',5'-cyclic GMP(out) + a dicarboxylate(in) = 3',5'-cyclic GMP(in) + a dicarboxylate(out). It catalyses the reaction urate(out) + a dicarboxylate(in) = urate(in) + a dicarboxylate(out). The catalysed reaction is kynurenate(out) + glutarate(in) = kynurenate(in) + glutarate(out). It carries out the reaction (indol-3-yl)acetate(out) + a dicarboxylate(in) = (indol-3-yl)acetate(in) + a dicarboxylate(out). The enzyme catalyses indoxyl sulfate(out) + a dicarboxylate(in) = indoxyl sulfate(in) + a dicarboxylate(out). It catalyses the reaction N-benzoylglycine(out) + a dicarboxylate(in) = N-benzoylglycine(in) + a dicarboxylate(out). The catalysed reaction is 3-carboxy-4-methyl-5-propyl-2-furanpropanoate(out) + a dicarboxylate(in) = 3-carboxy-4-methyl-5-propyl-2-furanpropanoate(in) + a dicarboxylate(out). In terms of biological role, secondary active transporter that functions as a Na(+)-independent organic anion (OA)/dicarboxylate antiporter where the uptake of one molecule of OA into the cell is coupled with an efflux of one molecule of intracellular dicarboxylate such as 2-oxoglutarate or glutarate. Mediates the uptake of OA across the basolateral side of proximal tubule epithelial cells, thereby contributing to the renal elimination of endogenous OA from the systemic circulation into the urine. Functions as a biopterin transporters involved in the uptake and the secretion of coenzymes tetrahydrobiopterin (BH4), dihydrobiopterin (BH2) and sepiapterin to urine, thereby determining baseline levels of blood biopterins. Transports prostaglandin E2 (PGE2) and prostaglandin F2-alpha (PGF2-alpha) and may contribute to their renal excretion. Also mediates the uptake of cyclic nucleotides such as cAMP and cGMP. Involved in the transport of neuroactive tryptophan metabolites kynurenate (KYNA) and xanthurenate (XA) and may contribute to their secretion from the brain. May transport glutamate. Also involved in the disposition of uremic toxins and potentially toxic xenobiotics by the renal organic anion secretory pathway, helping reduce their undesired toxicological effects on the body. Uremic toxins include the indoxyl sulfate (IS), hippurate/N-benzoylglycine (HA), indole acetate (IA), 3-carboxy-4- methyl-5-propyl-2-furanpropionate (CMPF) and urate. Xenobiotics include the mycotoxin ochratoxin (OTA). May also contribute to the transport of organic compounds in testes across the blood-testis-barrier. The chain is Solute carrier family 22 member 6 from Macaca fascicularis (Crab-eating macaque).